The following is a 305-amino-acid chain: Transcription factor MYB87 (305 aa).

2 HTH myb-type domains span residues 9–66 (KMAV…RPNL) and 67–117 (KHGG…KKKL). 2 DNA-binding regions (H-T-H motif) span residues 38 to 62 (WISL…LNYL) and 90 to 113 (WSII…NTRL).

In terms of tissue distribution, expressed in roots, leaves, internodes, shoot tips and flowers.

The protein resides in the nucleus. Its function is as follows. Transcription factor that functions as a regulator of genes affecting cell wall organization and remodeling. Activates genes related to the primary cell wall and represses genes related to the secondary cell wall and expansins. Required for the regulation of longitudinal cell growth in stems, leaves, petioles, roots, flowers and siliques. This Arabidopsis thaliana (Mouse-ear cress) protein is Transcription factor MYB87.